The following is a 317-amino-acid chain: Orange carotenoid-binding protein (317 aa).

The OCP N-terminal domain occupies alanine 18–glycine 169. Echinenone is bound by residues glutamate 34–alanine 38, leucine 37–tyrosine 44, threonine 80–methionine 83, leucine 107–methionine 117, isoleucine 125–tyrosine 129, isoleucine 151–methionine 161, tyrosine 201, cysteine 245–leucine 250, valine 273–methionine 284, and tryptophan 288.

Belongs to the orange carotenoid-binding protein family. As to quaternary structure, monomer. Interacts with the APC core of the phycobilisome (PB), probably at a ratio of 1:1 in a light-independent manner; possibly only OCP-R binds to PBs. Interacts with FRP. Detachment from PBs is accelerated by FPR. Requires 3'-hydroxyechinenone as cofactor. Post-translationally, proteolytically cleaved into a red 16.7 kDa form named red carotenoid-binding protein (RCP) which lacks 15 residues from the N-terminus and approximately 150 residues from the C-terminus.

The protein resides in the cellular thylakoid membrane. Its function is as follows. Acts as a blue-light photoreceptor and photo-protectant. Essential for inhibiting damaged induced by excess blue-green light via a process known as non-photochemical quenching (NPQ). In the dark or dim light the stable inactive form (OCP-O) is orange, upon illumination with blue-green light it converts to a metastable active red form (OCP-R), inducing energy dissipation, quenching cellular fluorescence via NPQ. One OCP-R molecule is sufficient to quench 1 phycobilisome. More OCP-R accumulates under high-light and low temperature; in the dark OCP-R spontaneously reverts to OCP-O. Reversion of OCP-O is accelerated by FRP. A kinetic study suggests conversion of OCP-O to OCP-R is limited by cis-trans proline isomerization of either Gln224-Pro225 or Pro225-Pro226. This is Orange carotenoid-binding protein from Synechocystis sp. (strain ATCC 27184 / PCC 6803 / Kazusa).